The sequence spans 298 residues: Nucleotide-binding protein Dred_3054 (298 aa).

20 to 27 contacts ATP; the sequence is GMSGAGKT. 71 to 74 is a GTP binding site; that stretch reads DIRG.

It belongs to the RapZ-like family.

Its function is as follows. Displays ATPase and GTPase activities. The protein is Nucleotide-binding protein Dred_3054 of Desulforamulus reducens (strain ATCC BAA-1160 / DSM 100696 / MI-1) (Desulfotomaculum reducens).